The chain runs to 238 residues: D-aminoacyl-tRNA deacylase (238 aa).

Belongs to the DtdA deacylase family. As to quaternary structure, monomer. It depends on Zn(2+) as a cofactor.

The catalysed reaction is a D-aminoacyl-tRNA + H2O = a tRNA + a D-alpha-amino acid + H(+). It carries out the reaction glycyl-tRNA(Ala) + H2O = tRNA(Ala) + glycine + H(+). The enzyme catalyses D-tyrosyl-tRNA(Tyr) + H2O = D-tyrosine + tRNA(Tyr). Its function is as follows. D-aminoacyl-tRNA deacylase with broad substrate specificity. By recycling D-aminoacyl-tRNA to D-amino acids and free tRNA molecules, this enzyme counteracts the toxicity associated with the formation of D-aminoacyl-tRNA entities in vivo. Catalyzes the hydrolysis of D-tyrosyl-tRNA(Tyr). In Saccharolobus solfataricus (strain ATCC 35092 / DSM 1617 / JCM 11322 / P2) (Sulfolobus solfataricus), this protein is D-aminoacyl-tRNA deacylase.